Consider the following 243-residue polypeptide: 3-deoxy-manno-octulosonate cytidylyltransferase (243 aa).

It belongs to the KdsB family.

The protein resides in the cytoplasm. It catalyses the reaction 3-deoxy-alpha-D-manno-oct-2-ulosonate + CTP = CMP-3-deoxy-beta-D-manno-octulosonate + diphosphate. It functions in the pathway nucleotide-sugar biosynthesis; CMP-3-deoxy-D-manno-octulosonate biosynthesis; CMP-3-deoxy-D-manno-octulosonate from 3-deoxy-D-manno-octulosonate and CTP: step 1/1. The protein operates within bacterial outer membrane biogenesis; lipopolysaccharide biosynthesis. Activates KDO (a required 8-carbon sugar) for incorporation into bacterial lipopolysaccharide in Gram-negative bacteria. The polypeptide is 3-deoxy-manno-octulosonate cytidylyltransferase (Helicobacter pylori (strain ATCC 700392 / 26695) (Campylobacter pylori)).